The chain runs to 778 residues: Dapper homolog 1 (778 aa).

Basic and acidic residues-rich tracts occupy residues Met1–Glu10 and Ala18–Arg40. The disordered stretch occupies residues Met1–Arg40. Residues Asp85–Arg149 form a required for self-association region. Residues Asp85–Arg149 adopt a coiled-coil conformation. The Nuclear export signal motif lies at Leu125–Leu134. 6 disordered regions span residues Lys305–Lys324, Gly359–Ser386, Ala397–Ser416, Glu428–Asn468, Glu544–Thr616, and Asn694–Ser721. Positions Arg375–Ser386 are enriched in basic and acidic residues. The segment covering Glu432 to Thr443 has biased composition (polar residues). Residues Lys551–Lys564 carry the Bipartite nuclear localization signal motif. The segment covering Arg554 to Lys563 has biased composition (basic and acidic residues). Residues Lys564–Arg574 are compositionally biased toward basic residues. Positions Asn694 to Ser704 are enriched in polar residues. The short motif at Arg768–Val778 is the PDZ-binding element. Phosphoserine; by PKA is present on Ser769.

It belongs to the dapper family. In terms of assembly, can form homodimers and heterodimers with DACT2 or DACT3. Interacts with CSNK1D, PKA catalytic subunit, PKC-type kinase, CSNK2A1, CSNK2B, DVL1, DLV2, DVAL3, VANGL1, VANGL2, CTNND1 and HDAC1. Interacts with GSK3B; the interaction is indicative for an association of DACT1 with the beta-catenin destruction complex. Interacts with GSK3A. Interacts with YWHAB; the interaction is enhanced by PKA phosphorylating DACT1 at Ser-769. Interacts with CTNNB1. Expressed in multiple tissues including brain, heart, kidney, liver and testis.

The protein resides in the cytoplasm. It is found in the nucleus. Its subcellular location is the synapse. Functionally, involved in regulation of intracellular signaling pathways during development. Specifically thought to play a role in canonical and/or non-canonical Wnt signaling pathways through interaction with DSH (Dishevelled) family proteins. The activation/inhibition of Wnt signaling may depend on the phosphorylation status. Proposed to regulate the degradation of CTNNB1/beta-catenin, thereby modulating the transcriptional activation of target genes of the Wnt signaling pathway. Its function in stabilizing CTNNB1 may involve inhibition of GSK3B activity. Promotes the membrane localization of CTNNB1. The cytoplasmic form can induce DVL2 degradation via a lysosome-dependent mechanism; the function is inhibited by PKA-induced binding to 14-3-3 proteins, such as YWHAB. Seems to be involved in morphogenesis at the primitive streak by regulating VANGL2 and DVL2; the function seems to be independent of canonical Wnt signaling and rather involves the non-canonical Wnt/planar cell polarity (PCP) pathway. The nuclear form may prevent the formation of LEF1:CTNNB1 complex and recruit HDAC1 to LEF1 at target gene promoters to repress transcription thus antagonizing Wnt signaling. May be involved in positive regulation of fat cell differentiation. During neuronal differentiation may be involved in excitatory synapse organization, and dendrite formation and establishment of spines. This chain is Dapper homolog 1 (Dact1), found in Mus musculus (Mouse).